Here is a 234-residue protein sequence, read N- to C-terminus: 1-(5-phosphoribosyl)-5-[(5-phosphoribosylamino)methylideneamino] imidazole-4-carboxamide isomerase (234 aa).

Residue aspartate 9 is the Proton acceptor of the active site. The active-site Proton donor is aspartate 131.

Belongs to the HisA/HisF family.

The protein resides in the cytoplasm. The catalysed reaction is 1-(5-phospho-beta-D-ribosyl)-5-[(5-phospho-beta-D-ribosylamino)methylideneamino]imidazole-4-carboxamide = 5-[(5-phospho-1-deoxy-D-ribulos-1-ylimino)methylamino]-1-(5-phospho-beta-D-ribosyl)imidazole-4-carboxamide. It participates in amino-acid biosynthesis; L-histidine biosynthesis; L-histidine from 5-phospho-alpha-D-ribose 1-diphosphate: step 4/9. The chain is 1-(5-phosphoribosyl)-5-[(5-phosphoribosylamino)methylideneamino] imidazole-4-carboxamide isomerase from Staphylococcus epidermidis (strain ATCC 12228 / FDA PCI 1200).